We begin with the raw amino-acid sequence, 931 residues long: MDSVTPNSRPESFPEFDSAGLAAAVDALAAQHSGREDMFRAAVVQLLKAELVKARAVAQAQLLKDRHGRRCAERLCFVQDEIIRILYAAATQHLYRSQVPSGAERMAVVATGGYGRGLMAPESDIDLLFILPYKQTAWGEQVAEAILYSLWDMGLKVGHATRSVDESIRQARGDMTIRTAILETRYLAGDRPLYDELVERFDTEVVQGTAAEFVAAKLAEREERHRRGGQSRYLVEPNVKDGKGGLRDLHTLFWIAKYVYRVRETAELVERGVFDAHEYRTFRRCADFLWSVRCNLHFVSGRPEERLSFDLQREIAVRLGYTSHPGMQDVERFMKHYFLVAKEVGNLTAILCAKLEDQQAKPAPVLSRVISRLKTGNSWRRVPESDDFIVDNNRINLAAPDVFKHDPVNLIRIFRLAQKNNLAFHPDAMRAVTRSLNLINTELRDNPDANRLFMEILTSNDAETVLRRMNETGVLGHFIRAFGRIVSMMQFNMYHHYTVDEHLIRCIGFLQEIERGGIDEFALASDLMRKIRPEHRAVIYISVLLHDVAKGRPEDHSIAGAKVARRLCPRLGFNNADTELVAWLIEEHLTMSTVAQSRDLSDRRTIEKFAAVVQSVEQMKLLTILTTADIRGVGPGVWNGWKAQLLRTLYYETEPVLTGGFSEVNRAKRITAAQAEFRNAFTDWPEDELNTYIGRHYPAYWLKVELPRKIRHARFVRASEDAGHKLAINVGFDPARGVTELTIFAMDHPWLLSIIAGACASAGANIVDAQIYTTTDGRALDTIAISREYERDEDEGRRATRIGETIEQVLEGKLRLPDAVARRTTRGKQHKAFSVEPEVSINNQWSELYTVIEVSGLDRPGLLYELTTAISKLNLNIASAHVATFGERARDVFYVTDLLGAQINAPTRQAAIKSALLHLLASDDTAAQPAA.

A uridylyltransferase region spans residues methionine 1–proline 383. The segment at glutamate 384–threonine 739 is uridylyl-removing. The 124-residue stretch at valine 499 to leucine 622 folds into the HD domain. ACT domains lie at glutamate 740–arginine 822 and valine 851–alanine 931.

Belongs to the GlnD family. Requires Mg(2+) as cofactor.

The catalysed reaction is [protein-PII]-L-tyrosine + UTP = [protein-PII]-uridylyl-L-tyrosine + diphosphate. It carries out the reaction [protein-PII]-uridylyl-L-tyrosine + H2O = [protein-PII]-L-tyrosine + UMP + H(+). With respect to regulation, uridylyltransferase (UTase) activity is inhibited by glutamine, while glutamine activates uridylyl-removing (UR) activity. Modifies, by uridylylation and deuridylylation, the PII regulatory proteins (GlnB and homologs), in response to the nitrogen status of the cell that GlnD senses through the glutamine level. Under low glutamine levels, catalyzes the conversion of the PII proteins and UTP to PII-UMP and PPi, while under higher glutamine levels, GlnD hydrolyzes PII-UMP to PII and UMP (deuridylylation). Thus, controls uridylylation state and activity of the PII proteins, and plays an important role in the regulation of nitrogen fixation and metabolism. The chain is Bifunctional uridylyltransferase/uridylyl-removing enzyme from Bradyrhizobium sp. (strain BTAi1 / ATCC BAA-1182).